The following is a 1353-amino-acid chain: DNA-directed RNA polymerase subunit beta' (1353 aa).

The segment at M1 to K117 is unknown. A DNA-directed RNA polymerase subunit beta' region spans residues L118–N1353. C189, C191, C203, and C206 together coordinate Zn(2+). Residues D578, D580, and D582 each contribute to the Mg(2+) site.

The protein belongs to the RNA polymerase beta' chain family. The RNAP catalytic core consists of 2 alpha, 1 beta, 1 beta' and 1 omega subunit. When a sigma factor is associated with the core the holoenzyme is formed, which can initiate transcription. Mg(2+) serves as cofactor. Requires Zn(2+) as cofactor.

It catalyses the reaction RNA(n) + a ribonucleoside 5'-triphosphate = RNA(n+1) + diphosphate. In terms of biological role, DNA-dependent RNA polymerase catalyzes the transcription of DNA into RNA using the four ribonucleoside triphosphates as substrates. The sequence is that of DNA-directed RNA polymerase subunit beta' from Aster yellows witches'-broom phytoplasma (strain AYWB).